The following is a 481-amino-acid chain: Cobyric acid synthase (481 aa).

A GATase cobBQ-type domain is found at 248–435 (ALTVAWLAFS…LHGMFGSDRF (188 aa)). C330 acts as the Nucleophile in catalysis. H427 is a catalytic residue.

This sequence belongs to the CobB/CobQ family. CobQ subfamily.

It participates in cofactor biosynthesis; adenosylcobalamin biosynthesis. Catalyzes amidations at positions B, D, E, and G on adenosylcobyrinic A,C-diamide. NH(2) groups are provided by glutamine, and one molecule of ATP is hydrogenolyzed for each amidation. This Cereibacter sphaeroides (strain ATCC 17025 / ATH 2.4.3) (Rhodobacter sphaeroides) protein is Cobyric acid synthase.